A 425-amino-acid chain; its full sequence is Glucan endo-1,3-beta-glucosidase 10 (425 aa).

Residues 1-26 (MASSSLQSLFSLFCLALFSLPLIVSS) form the signal peptide. E119 (proton donor) is an active-site residue. A glycan (N-linked (GlcNAc...) asparagine) is linked at N124. The active-site Nucleophile is the E266. The segment at 347-387 (GIKTSSTHSSGSGSSNSTGGSSSGGGGNTGGSSSGGGIYQP) is disordered. Low complexity predominate over residues 350-366 (TSSTHSSGSGSSNSTGG). N362 carries N-linked (GlcNAc...) asparagine glycosylation. The segment covering 367-384 (SSSGGGGNTGGSSSGGGI) has biased composition (gly residues). Residue S401 is the site of GPI-anchor amidated serine attachment. Residues 402–425 (AGGKGRFVECVLFFFLLCIIKLRL) constitute a propeptide, removed in mature form.

It belongs to the glycosyl hydrolase 17 family. In terms of tissue distribution, highly expressed in flowers and siliques.

Its subcellular location is the cell membrane. The protein resides in the cell junction. The protein localises to the plasmodesma. The catalysed reaction is Hydrolysis of (1-&gt;3)-beta-D-glucosidic linkages in (1-&gt;3)-beta-D-glucans.. Functionally, plasmodesmal-associated membrane beta-1,3-glucanase involved in plasmodesmal callose degradation and functions in the gating of plasmodesmata. The sequence is that of Glucan endo-1,3-beta-glucosidase 10 from Arabidopsis thaliana (Mouse-ear cress).